The primary structure comprises 1184 residues: DNA-directed RNA polymerase subunit beta (1184 aa).

The tract at residues 1160–1184 (DDDFTNQNDAFNIVQPENAATEKTE) is disordered.

It belongs to the RNA polymerase beta chain family. As to quaternary structure, the RNAP catalytic core consists of 2 alpha, 1 beta, 1 beta' and 1 omega subunit. When a sigma factor is associated with the core the holoenzyme is formed, which can initiate transcription.

The catalysed reaction is RNA(n) + a ribonucleoside 5'-triphosphate = RNA(n+1) + diphosphate. DNA-dependent RNA polymerase catalyzes the transcription of DNA into RNA using the four ribonucleoside triphosphates as substrates. The protein is DNA-directed RNA polymerase subunit beta of Listeria innocua serovar 6a (strain ATCC BAA-680 / CLIP 11262).